A 321-amino-acid polypeptide reads, in one-letter code: Hydropyrene synthase (321 aa).

4 residues coordinate Mg(2+): aspartate 82, asparagine 225, serine 229, and glutamate 233. The DDxx(x)D/E motif motif lies at 82 to 87 (DDRAID). An NDxxSxxxD/E motif motif is present at residues 225–233 (NDLHSFARE).

It belongs to the terpene synthase family. The cofactor is Mg(2+).

The enzyme catalyses (2E,6E,10E)-geranylgeranyl diphosphate = hydropyrene + diphosphate. It catalyses the reaction (2E,6E,10E)-geranylgeranyl diphosphate + H2O = hydropyrenol + diphosphate. It carries out the reaction (2E,6E,10E)-geranylgeranyl diphosphate = isoelisabethatriene + diphosphate. It functions in the pathway secondary metabolite biosynthesis; terpenoid biosynthesis. In terms of biological role, terpene synthase that catalyzes the conversion of geranylgeranyl diphosphate (GGPP) into a mixture of diterpenes, including hydropyrene (HP), hydropyrenol (HPol), isoelisabethatriene and traces of isoelisabethatriene B. Hydropyrene is the main product. Some other diterpenoids are also produced in very low quantities. The protein is Hydropyrene synthase of Streptomyces clavuligerus.